The sequence spans 290 residues: Small ribosomal subunit protein bS6 (290 aa).

The segment at 208-233 is disordered; sequence VEEAKTTAKKPAAPKMSAAERAKVDG.

This sequence belongs to the bacterial ribosomal protein bS6 family.

In terms of biological role, binds together with bS18 to 16S ribosomal RNA. The polypeptide is Small ribosomal subunit protein bS6 (Mesoplasma florum (strain ATCC 33453 / NBRC 100688 / NCTC 11704 / L1) (Acholeplasma florum)).